Here is a 167-residue protein sequence, read N- to C-terminus: Lipoprotein signal peptidase (167 aa).

Transmembrane regions (helical) follow at residues 10-30 (LIWL…KAWV), 68-88 (WQMW…TFWL), and 98-118 (SALP…DRFL). Active-site residues include Asp-124 and Asp-142. The helical transmembrane segment at 138–158 (FNLADSAIVAGAIGIGLLSLF) threads the bilayer.

This sequence belongs to the peptidase A8 family.

It localises to the cell inner membrane. The enzyme catalyses Release of signal peptides from bacterial membrane prolipoproteins. Hydrolyzes -Xaa-Yaa-Zaa-|-(S,diacylglyceryl)Cys-, in which Xaa is hydrophobic (preferably Leu), and Yaa (Ala or Ser) and Zaa (Gly or Ala) have small, neutral side chains.. It participates in protein modification; lipoprotein biosynthesis (signal peptide cleavage). In terms of biological role, this protein specifically catalyzes the removal of signal peptides from prolipoproteins. This is Lipoprotein signal peptidase from Xylella fastidiosa (strain M23).